A 274-amino-acid polypeptide reads, in one-letter code: Large ribosomal subunit protein uL2 (274 aa).

Residues 223–265 (VVMNPVDHPHGGGEGRTSGGRHPVSPWGVPTKGYKTRSNKRTD) are disordered.

The protein belongs to the universal ribosomal protein uL2 family. As to quaternary structure, part of the 50S ribosomal subunit. Forms a bridge to the 30S subunit in the 70S ribosome.

Its function is as follows. One of the primary rRNA binding proteins. Required for association of the 30S and 50S subunits to form the 70S ribosome, for tRNA binding and peptide bond formation. It has been suggested to have peptidyltransferase activity; this is somewhat controversial. Makes several contacts with the 16S rRNA in the 70S ribosome. This Vibrio vulnificus (strain CMCP6) protein is Large ribosomal subunit protein uL2.